A 300-amino-acid chain; its full sequence is Cyclic nucleotide synthase CdnE01 (300 aa).

Mg(2+) contacts are provided by aspartate 63, aspartate 65, and aspartate 137.

It belongs to the CD-NTase family. E01 subfamily. Mg(2+) is required as a cofactor.

With respect to regulation, binds to and probably activated by a virus-derived, approximately 400 nucleotide RNA (called CBASS-activating bacteriophage RNA, cabRNA) that begins in the viral terminase subunit terS and extends into terL, as well as by a shorter RNA with part of the cabRNA sequence able to form a hairpin. RNA secondary and/or tertiary structure, as well as viral infection itself, are important for CdnE activation. In terms of biological role, cyclic nucleotide synthase (second messenger synthase) of a CBASS antivirus system. CBASS (cyclic oligonucleotide-based antiphage signaling system) provides immunity against bacteriophage. The CD-NTase protein synthesizes cyclic nucleotides in response to infection; these serve as specific second messenger signals. The signals activate a diverse range of effectors, leading to bacterial cell death and thus abortive phage infection. A type I-B CBASS system. Protects S.aureus against phage infection. When the CBASS operon (cdnE and the following gene) is introduced in S.aureus strain RN4220 there is strong protection against lytic DNA phages 80alpha-vir and phi-NM1-gamma-6 but little to no protection against phages phi-NM4-gamma-4 or phi-12-gamma-3. This chain is Cyclic nucleotide synthase CdnE01, found in Staphylococcus haemolyticus.